A 439-amino-acid chain; its full sequence is Trigger factor (439 aa).

The PPIase FKBP-type domain occupies glycine 170–proline 255.

Belongs to the FKBP-type PPIase family. Tig subfamily.

Its subcellular location is the cytoplasm. The enzyme catalyses [protein]-peptidylproline (omega=180) = [protein]-peptidylproline (omega=0). Functionally, involved in protein export. Acts as a chaperone by maintaining the newly synthesized protein in an open conformation. Functions as a peptidyl-prolyl cis-trans isomerase. This is Trigger factor from Oenococcus oeni (strain ATCC BAA-331 / PSU-1).